A 364-amino-acid chain; its full sequence is DNA replication and repair protein RecF (364 aa).

30-37 (GRNAQGKT) serves as a coordination point for ATP.

Belongs to the RecF family.

It localises to the cytoplasm. The RecF protein is involved in DNA metabolism; it is required for DNA replication and normal SOS inducibility. RecF binds preferentially to single-stranded, linear DNA. It also seems to bind ATP. This Pelotomaculum thermopropionicum (strain DSM 13744 / JCM 10971 / SI) protein is DNA replication and repair protein RecF.